Reading from the N-terminus, the 491-residue chain is Probable allantoate deiminase (491 aa).

The first 32 residues, 1–32 (MALLLSYPRRHPSIHLLILSAYALFLLPILDG), serve as a signal peptide directing secretion. The N-linked (GlcNAc...) asparagine glycan is linked to Asn-109. Residues His-120, Asp-131, Glu-168, and His-234 each contribute to the Mn(2+) site. Asn-265 and Asn-343 each carry an N-linked (GlcNAc...) asparagine glycan. His-454 lines the Mn(2+) pocket.

This sequence belongs to the peptidase M20A family. As to quaternary structure, homodimer. It depends on Mn(2+) as a cofactor.

The protein resides in the endoplasmic reticulum. The catalysed reaction is allantoate + H2O + 2 H(+) = (S)-2-ureidoglycine + NH4(+) + CO2. Functionally, involved in the catabolism of purine nucleotides. The sequential activity of AAH, UGLYAH and UAH allows a complete purine breakdown without the intermediate generation of urea. The chain is Probable allantoate deiminase from Oryza sativa subsp. japonica (Rice).